We begin with the raw amino-acid sequence, 340 residues long: Entry-fusion complex protein OPG094 (340 aa).

A disordered region spans residues 1–20 (MGGGVSVELPKRDPPPGVPT). Gly2 is lipidated: N-myristoyl glycine; by host. The Virion surface segment spans residues 2-319 (GGGVSVELPK…VQHNIKHSFD (318 aa)). Residues 320-340 (LKLHLISLLSLLVIWILIVAI) form a helical; Signal-anchor for type II membrane protein membrane-spanning segment.

The protein belongs to the orthopoxvirus OPG086 family. Interacts with OPG143. Component of the entry fusion complex (EFC) composed of OPG053, OPG076, OPG086, OPG094, OPG095, OPG099, OPG107, OPG143, OPG104, OPG147 and OPG155. Except for OPG095 and OPG053, each of the EFC proteins is required for assembly or stability of the complex. Post-translationally, unglycosylated because produced in viral factories instead of the classic ER -Golgi route.

It localises to the virion membrane. Its function is as follows. Component of the entry fusion complex (EFC), which consists of 11 proteins. During cell infection, this complex mediates entry of the virion core into the host cytoplasm by a two-step mechanism consisting of lipid mixing of the viral and cellular membranes and subsequent pore formation. This Homo sapiens (Human) protein is Entry-fusion complex protein OPG094 (OPG094).